We begin with the raw amino-acid sequence, 399 residues long: Methylthioribose kinase (399 aa).

Residues asparagine 40, lysine 57, and glutamate 111–leucine 113 contribute to the ATP site. Aspartate 229 provides a ligand contact to substrate. Aspartate 246–glutamate 248 serves as a coordination point for ATP. Arginine 344 is a binding site for substrate.

It belongs to the methylthioribose kinase family. Homodimer.

It carries out the reaction 5-(methylsulfanyl)-D-ribose + ATP = 5-(methylsulfanyl)-alpha-D-ribose 1-phosphate + ADP + H(+). The protein operates within amino-acid biosynthesis; L-methionine biosynthesis via salvage pathway; S-methyl-5-thio-alpha-D-ribose 1-phosphate from S-methyl-5'-thioadenosine (hydrolase route): step 2/2. Catalyzes the phosphorylation of methylthioribose into methylthioribose-1-phosphate. The sequence is that of Methylthioribose kinase from Citrobacter koseri (strain ATCC BAA-895 / CDC 4225-83 / SGSC4696).